The chain runs to 339 residues: Annexin A2 (339 aa).

At Ser2 the chain carries N-acetylserine. The segment at 2–24 (STVHEILSKLSLEGDHSLPPSAY) is S100A10-binding site. At Tyr24 the chain carries Phosphotyrosine; by SRC. Thr26 carries the phosphothreonine; by PKC modification. 4 Annexin repeats span residues 33-104 (FDAD…GLLK), 105-176 (TPSQ…ALAK), 189-261 (ELID…NLVQ), and 265-336 (NKQL…NLCG).

This sequence belongs to the annexin family. Heterotetramer containing 2 light chains of S100A10/p11 and 2 heavy chains of ANXA2/p36.

The protein resides in the secreted. The protein localises to the extracellular space. Its subcellular location is the extracellular matrix. It localises to the basement membrane. Its function is as follows. Calcium-regulated membrane-binding protein whose affinity for calcium is greatly enhanced by anionic phospholipids. It binds two calcium ions with high affinity. The sequence is that of Annexin A2 (ANXA2) from Gallus gallus (Chicken).